We begin with the raw amino-acid sequence, 443 residues long: 5-methylthioadenosine/S-adenosylhomocysteine deaminase (443 aa).

2 residues coordinate Zn(2+): His74 and His76. Residues Glu103 and His196 each coordinate substrate. His223 contributes to the Zn(2+) binding site. Positions 226 and 311 each coordinate substrate. Asp311 contacts Zn(2+).

The protein belongs to the metallo-dependent hydrolases superfamily. MTA/SAH deaminase family. Zn(2+) serves as cofactor.

It catalyses the reaction S-adenosyl-L-homocysteine + H2O + H(+) = S-inosyl-L-homocysteine + NH4(+). The enzyme catalyses S-methyl-5'-thioadenosine + H2O + H(+) = S-methyl-5'-thioinosine + NH4(+). In terms of biological role, catalyzes the deamination of 5-methylthioadenosine and S-adenosyl-L-homocysteine into 5-methylthioinosine and S-inosyl-L-homocysteine, respectively. Is also able to deaminate adenosine. This Haloquadratum walsbyi (strain DSM 16790 / HBSQ001) protein is 5-methylthioadenosine/S-adenosylhomocysteine deaminase.